We begin with the raw amino-acid sequence, 216 residues long: Ras-like protein rasW (216 aa).

16 to 23 (GDGGVGKT) provides a ligand contact to GTP. Residues 38–46 (YDPTIEDSY) carry the Effector region motif. GTP-binding positions include 63-67 (DTAGQ) and 122-125 (NKID). A disordered region spans residues 171–193 (KRKEDPQSHKPSKDSDSKKPLVN). Over residues 172 to 189 (RKEDPQSHKPSKDSDSKK) the composition is skewed to basic and acidic residues. Residue C213 is modified to Cysteine methyl ester. C213 is lipidated: S-geranylgeranyl cysteine. A propeptide spans 214 to 216 (KMM) (removed in mature form).

This sequence belongs to the small GTPase superfamily. Ras family.

The protein localises to the cell membrane. The catalysed reaction is GTP + H2O = GDP + phosphate + H(+). Functionally, ras proteins bind GDP/GTP and possess intrinsic GTPase activity. The polypeptide is Ras-like protein rasW (rasW) (Dictyostelium discoideum (Social amoeba)).